Reading from the N-terminus, the 232-residue chain is Cysteine proteinase inhibitor 7 (232 aa).

The first 29 residues, 1–29 (MDMRRASMCMMLICVSLVLLSGFGQFVIC), serve as a signal peptide directing secretion. Cystatin domains follow at residues 46–135 (GGFS…KNII) and 152–214 (FDWR…ERGN). The Secondary area of contact signature appears at 91–95 (QVVAG). Ser181 is modified (phosphoserine).

This sequence belongs to the cystatin family. Phytocystatin subfamily.

It localises to the secreted. Specific inhibitor of cysteine proteinases. Probably involved in the regulation of endogenous processes and in defense against pests and pathogens. This chain is Cysteine proteinase inhibitor 7 (CYS7), found in Arabidopsis thaliana (Mouse-ear cress).